We begin with the raw amino-acid sequence, 206 residues long: Somatotropin (206 aa).

The signal sequence occupies residues 1–22 (MAGLHFFPALLALLMASLQTHQ). 2 disulfide bridges follow: cysteine 75–cysteine 179 and cysteine 196–cysteine 204.

This sequence belongs to the somatotropin/prolactin family.

The protein localises to the secreted. Growth hormone plays an important role in growth control and is involved in the regulation of several anabolic processes. Implicated as an osmoregulatory substance important for seawater adaptation. The sequence is that of Somatotropin (gh) from Protopterus annectens (African lungfish).